Here is a 594-residue protein sequence, read N- to C-terminus: UvrABC system protein C (594 aa).

The region spanning 14–91 (DQPGCYLMKD…IKKHDPKYNI (78 aa)) is the GIY-YIG domain. The UVR domain maps to 196-231 (KEVRSELETKMYEASEKLEFERAKELRDQIAHIDAI).

Belongs to the UvrC family. In terms of assembly, interacts with UvrB in an incision complex.

It is found in the cytoplasm. The UvrABC repair system catalyzes the recognition and processing of DNA lesions. UvrC both incises the 5' and 3' sides of the lesion. The N-terminal half is responsible for the 3' incision and the C-terminal half is responsible for the 5' incision. The polypeptide is UvrABC system protein C (Bacillus cereus (strain AH187)).